The sequence spans 1396 residues: DNA ligase 6 (1396 aa).

Disordered regions lie at residues 441–464 (KNACEDGGENVPSSRGPILHDTTP) and 562–599 (MNLTKGTISPGKRGKSSGSKSNKKAKKDPKSKPVGPGQ). 2 consecutive short sequence motifs (nuclear localization signal) follow at residues 572-579 (GKRGKSSG) and 886-893 (LRKISVQT). E1037 serves as a coordination point for ATP. K1039 (N6-AMP-lysine intermediate) is an active-site residue. 4 residues coordinate ATP: R1044, R1060, E1092, and F1136. E1092 is a Mg(2+) binding site. Mg(2+) is bound at residue E1207. Residues K1212, R1225, and K1231 each contribute to the ATP site.

The protein belongs to the ATP-dependent DNA ligase family. Mg(2+) is required as a cofactor. As to expression, mostly expressed in buds and flowers, and, to a lower extent, in stems, leaves, siliques and seeds.

The protein resides in the nucleus. The catalysed reaction is ATP + (deoxyribonucleotide)n-3'-hydroxyl + 5'-phospho-(deoxyribonucleotide)m = (deoxyribonucleotide)n+m + AMP + diphosphate.. DNA ligase that seals nicks in double-stranded DNA during DNA replication, DNA recombination and DNA repair. Required to maintain seed viability (e.g. longevity and storability) and during seed germination, probably by repairing DNA damage accumulated during seed development, storage and/or imbibition. Facilitates seed germination in cold conditions (2 degrees Celsius) and under oxidative stress (e.g. menadione, a genotoxic agent). Involved in repair of X-ray-induced damage. In terms of biological role, limits stable root transformation by A.tumefaciens T-DNA. The chain is DNA ligase 6 from Arabidopsis thaliana (Mouse-ear cress).